A 500-amino-acid chain; its full sequence is Lycopene beta cyclase, chloroplastic (500 aa).

The transit peptide at 1-81 (MDTLLKTPNK…ELPMYDPSKG (81 aa)) directs the protein to the chloroplast. 86-114 (LAVVGGGPAGLAVAQQVSEAGLSVVSIDP) provides a ligand contact to NAD(+).

This sequence belongs to the lycopene cyclase family.

The protein resides in the plastid. It localises to the chloroplast. It catalyses the reaction a carotenoid psi-end group = a carotenoid beta-end derivative. Its pathway is carotenoid biosynthesis; beta-carotene biosynthesis. It participates in carotenoid biosynthesis; beta-zeacarotene biosynthesis. In terms of biological role, catalyzes the double cyclization reaction which converts lycopene to beta-carotene and neurosporene to beta-zeacarotene. The protein is Lycopene beta cyclase, chloroplastic (LCY1) of Nicotiana tabacum (Common tobacco).